A 367-amino-acid polypeptide reads, in one-letter code: Metacaspase-1 (367 aa).

A disordered region spans residues 47-77; that stretch reads DPRTAPPPQPSSAPSPPPQIHAPPGQLPHPH. Residues 50-73 are compositionally biased toward pro residues; that stretch reads TAPPPQPSSAPSPPPQIHAPPGQL. Catalysis depends on residues His-164 and Cys-220.

The protein belongs to the peptidase C14B family. As to quaternary structure, interacts (via N-terminus) with LSD1. Proteolytically processed; by an autocatalytic mechanism.

In terms of biological role, cysteine protease that cleaves specifically after arginine or lysine residues. Does not cleave caspase-specific substrates. Acts as a positive regulator of cell death. Required for both oxidative stress cell death response and hypersensitive cell death response mediated by immune response. This chain is Metacaspase-1 (AMC1), found in Arabidopsis thaliana (Mouse-ear cress).